A 280-amino-acid chain; its full sequence is F420-dependent methylenetetrahydromethanopterin dehydrogenase (280 aa).

The protein belongs to the MTD family.

The catalysed reaction is 5,10-methylenetetrahydromethanopterin + oxidized coenzyme F420-(gamma-L-Glu)(n) + 2 H(+) = 5,10-methenyl-5,6,7,8-tetrahydromethanopterin + reduced coenzyme F420-(gamma-L-Glu)(n). The protein operates within one-carbon metabolism; methanogenesis from CO(2); 5,10-methylene-5,6,7,8-tetrahydromethanopterin from 5,10-methenyl-5,6,7,8-tetrahydromethanopterin (coenzyme F420 route): step 1/1. Functionally, catalyzes the reversible reduction of methenyl-H(4)MPT(+) to methylene-H(4)MPT. This is F420-dependent methylenetetrahydromethanopterin dehydrogenase from Methanospirillum hungatei JF-1 (strain ATCC 27890 / DSM 864 / NBRC 100397 / JF-1).